A 1388-amino-acid chain; its full sequence is Rho-associated protein kinase 2 (1388 aa).

The segment at 1–24 is disordered; it reads MSRPPPTGKMPGAPEAAAGDGAGA. One can recognise a Protein kinase domain in the interval 92-354; that stretch reads YDVVKVIGRG…VEEIKSASFF (263 aa). Residues 98–106 and Lys121 contribute to the ATP site; that span reads IGRGAFGEV. Asp214 serves as the catalytic Proton acceptor. An AGC-kinase C-terminal domain is found at 357 to 425; that stretch reads DQWNWDNIRE…FRENLLLSDS (69 aa). Residues 363-784 form an interaction with PPP1R12A region; sequence NIRETAAPVV…LNELLKQKDV (422 aa). The interaction with NPM1 stretch occupies residues 373–420; the sequence is PELSSDIDSSNFDDIEDDKGDVETFPIPKAFVGNQLPFIGFTYFRENL. Residue Thr414 is modified to Phosphothreonine; by ROCK2. Coiled coils occupy residues 439–1024 and 1052–1131; these read SEES…EKQL and SDTD…IGMD. The REM-1 domain maps to 497 to 573; that stretch reads TLRQLEREKA…LDEANALLRT (77 aa). The span at 513–530 shows a compositional bias: basic and acidic residues; that stretch reads AEYQRKADHEADKKRNLE. Residues 513–532 are disordered; it reads AEYQRKADHEADKKRNLEND. Tyr722 is subject to Phosphotyrosine; by SRC. Residues 979–1047 enclose the RhoBD domain; sequence TSDVANLANE…LAEIMNRKEP (69 aa). Residues 979 to 1047 form an RHOA binding region; it reads TSDVANLANE…LAEIMNRKEP (69 aa). Ser1137 is subject to Phosphoserine. In terms of domain architecture, PH spans 1150-1349; the sequence is ESRLEGWLSL…WVSRLVKKIP (200 aa). At Thr1212 the chain carries Phosphothreonine. The segment at 1260–1315 adopts a Phorbol-ester/DAG-type zinc-finger fold; sequence GHEFIPTLYHFPTNCEACMKPLWHMFKPPPALECSRCHIKCHKDHMDKKEEIIAPC. A disordered region spans residues 1345–1388; that stretch reads VKKIPKKPPAPDPFARSSPRTSMKIQQNQSIRRPSRQLAPNKPS. Residues Ser1362 and Ser1374 each carry the phosphoserine modification. The span at 1362 to 1376 shows a compositional bias: polar residues; it reads SPRTSMKIQQNQSIR.

The protein belongs to the protein kinase superfamily. AGC Ser/Thr protein kinase family. Homodimer. Interacts with IRS1. Interacts with RAF1. Interacts with RHOA (activated by GTP), RHOB, RHOC. Interacts with PPP1R12A. Interacts with EP300. Interacts with CHORDC1. Interacts with BRCA2. Interacts with NPM1; this interaction enhances its activity. Interacts with SORL1. Interacts with PJVK. Mg(2+) serves as cofactor. Post-translationally, autophosphorylated. Phosphorylation at Tyr-722 reduces its binding to RHOA and is crucial for focal adhesion dynamics. Dephosphorylation by PTPN11 stimulates its RHOA binding activity. In terms of processing, cleaved by granzyme B during apoptosis. This leads to constitutive activation of the kinase and membrane blebbing. As to expression, highly expressed in brain, lung, liver, skeletal muscle, kidney and testis.

The protein localises to the cytoplasm. Its subcellular location is the cell membrane. It is found in the nucleus. It localises to the cytoskeleton. The protein resides in the microtubule organizing center. The protein localises to the centrosome. It carries out the reaction L-seryl-[protein] + ATP = O-phospho-L-seryl-[protein] + ADP + H(+). It catalyses the reaction L-threonyl-[protein] + ATP = O-phospho-L-threonyl-[protein] + ADP + H(+). Activated by RHOA binding. Inhibited by Y-27632. Functionally, protein kinase which is a key regulator of actin cytoskeleton and cell polarity. Involved in regulation of smooth muscle contraction, actin cytoskeleton organization, stress fiber and focal adhesion formation, neurite retraction, cell adhesion and motility via phosphorylation of ADD1, BRCA2, CNN1, EZR, DPYSL2, EP300, MSN, MYL9/MLC2, NPM1, RDX, PPP1R12A and VIM. Phosphorylates SORL1 and IRF4. Acts as a negative regulator of VEGF-induced angiogenic endothelial cell activation. Positively regulates the activation of p42/MAPK1-p44/MAPK3 and of p90RSK/RPS6KA1 during myogenic differentiation. Plays an important role in the timely initiation of centrosome duplication. Inhibits keratinocyte terminal differentiation. May regulate closure of the eyelids and ventral body wall through organization of actomyosin bundles. Plays a critical role in the regulation of spine and synaptic properties in the hippocampus. Plays a role in placental homeostasis during the perinatal period. Plays an important role in generating the circadian rhythm of the aortic myofilament Ca(2+) sensitivity and vascular contractility by modulating the myosin light chain phosphorylation. The polypeptide is Rho-associated protein kinase 2 (Rock2) (Rattus norvegicus (Rat)).